The primary structure comprises 259 residues: TCF3 fusion partner homolog (259 aa).

Disordered regions lie at residues 50–72 (GGLGDSGLRERDEEEEAARGRRR) and 141–210 (EDDG…APVQ). Ser167 is subject to Phosphoserine. Residues 167-178 (SPSQRTTATLDP) are compositionally biased toward polar residues. Thr172 is subject to Phosphothreonine. 2 positions are modified to phosphoserine: Ser180 and Ser188. Thr203 is subject to Phosphothreonine. A Glycyl lysine isopeptide (Lys-Gly) (interchain with G-Cter in SUMO2) cross-link involves residue Lys222. Ser255 bears the Phosphoserine mark.

Interacts with NOL3; translocates NOL3 into the nucleus and negatively regulated TFPT-induced cell death. Component of the chromatin remodeling INO80 complex; specifically part of a complex module associated with the N-terminus of INO80.

The protein resides in the nucleus. Appears to promote apoptosis in a p53/TP53-independent manner. Functionally, putative regulatory component of the chromatin remodeling INO80 complex which is involved in transcriptional regulation, DNA replication and probably DNA repair. This Mus musculus (Mouse) protein is TCF3 fusion partner homolog (Tfpt).